The sequence spans 218 residues: Oxygen regulatory protein NreC (218 aa).

Residues 2–119 form the Response regulatory domain; the sequence is KIVIADDHAV…QLILAVRTVY (118 aa). The residue at position 53 (Asp53) is a 4-aspartylphosphate. The HTH luxR-type domain occupies 149–214; it reads SSDPFKILSK…ELVEYALKKK (66 aa). The H-T-H motif DNA-binding region spans 173–192; that stretch reads NKDIAEKLFVSVKTVEAHKT.

In terms of processing, phosphorylated by NreB.

It localises to the cytoplasm. Its function is as follows. Member of the two-component regulatory system NreB/NreC involved in the control of dissimilatory nitrate/nitrite reduction in response to oxygen. Phosphorylated NreC binds to a GC-rich palindromic sequence at the promoters of the nitrate (narGHJI) and nitrite (nir) reductase operons, as well as the putative nitrate transporter gene narT, and activates their expression. This Staphylococcus epidermidis (strain ATCC 12228 / FDA PCI 1200) protein is Oxygen regulatory protein NreC (nreC).